Consider the following 211-residue polypeptide: uncharacterized protein (211 aa).

3 consecutive transmembrane segments (helical) span residues 22–42 (FINFVRIAICIVMVWIGGLKV), 111–131 (IIGATIVTVGLLTLSGIWFPV), and 133–153 (GMAGGLLTFGMSIVTLSFMIT).

It to E.coli YkgB. This sequence to H.influenzae HI_0219.

Its subcellular location is the cell membrane. This is an uncharacterized protein from Mannheimia haemolytica (Pasteurella haemolytica).